The chain runs to 172 residues: Large ribosomal subunit protein uL11m (172 aa).

This sequence belongs to the universal ribosomal protein uL11 family.

The protein resides in the mitochondrion. This is Large ribosomal subunit protein uL11m (mrpl11) from Dictyostelium discoideum (Social amoeba).